Consider the following 227-residue polypeptide: Lysosomal-associated transmembrane protein 4B (227 aa).

A run of 4 helical transmembrane segments spans residues 26–46, 72–92, 100–120, and 153–173; these read ILLG…LLSA, MCIA…ATYG, WIIP…LVAI, and CLVL…GYLI. Positions 205-222 are required for NEDD4 interaction; it reads PPYDDATAVPSTAKEPPP.

The protein belongs to the LAPTM4/LAPTM5 transporter family. As to quaternary structure, homooligomer; upon reaching the lysosomes. Interacts with MCOLN1. Interacts with NEDD4; may play a role in the lysosomal sorting of LAPTM4B; enhances HGS association with NEDD4; mediates inhibition of EGFR degradation. Interacts with PIP5K1C; promotes SNX5 association with LAPTM4B; kinase activity of PIP5K1C is required; interaction is regulated by phosphatidylinositol 4,5-bisphosphate generated by PIP5K1C. Interacts with HGS; promotes HGS ubiquitination. Interacts with SNX5. Interacts with SLC3A2 and SLC7A5; recruits SLC3A2 and SLC7A5 to lysosomes to promote leucine uptake into these organelles and is required for mTORC1 activation. Interacts with LRRC32; decreases TGFB1 production in regulatory T cells. Interacts with BECN1; competes with EGFR for LAPTM4B binding; regulates EGFR activity. Interacts with EGFR; positively correlates with EGFR activation. In terms of processing, undergoes proteolytic cleavage following delivery to the lysosomes. Post-translationally, ubiquitinated by NEDD4.

The protein resides in the endomembrane system. Its subcellular location is the late endosome membrane. It localises to the cell membrane. The protein localises to the cell projection. It is found in the lysosome membrane. The protein resides in the endosome membrane. Its subcellular location is the endosome. It localises to the multivesicular body membrane. The protein localises to the multivesicular body lumen. Required for optimal lysosomal function. Blocks EGF-stimulated EGFR intraluminal sorting and degradation. Conversely by binding with the phosphatidylinositol 4,5-bisphosphate, regulates its PIP5K1C interaction, inhibits HGS ubiquitination and relieves LAPTM4B inhibition of EGFR degradation. Recruits SLC3A2 and SLC7A5 (the Leu transporter) to the lysosome, promoting entry of leucine and other essential amino acid (EAA) into the lysosome, stimulating activation of proton-transporting vacuolar (V)-ATPase protein pump (V-ATPase) and hence mTORC1 activation. Plays a role as negative regulator of TGFB1 production in regulatory T cells. Binds ceramide and facilitates its exit from late endosome in order to control cell death pathways. The protein is Lysosomal-associated transmembrane protein 4B of Mus musculus (Mouse).